The primary structure comprises 544 residues: uncharacterized protein (544 aa).

This is an uncharacterized protein from Acanthamoeba polyphaga mimivirus (APMV).